We begin with the raw amino-acid sequence, 149 residues long: Conglutin delta 3 (149 aa).

Positions 1–22 are cleaved as a signal peptide; the sequence is MAKLTILIALVAALVLVVHTSA. Disulfide bonds link C30–C98, C42–C86, C87–C134, and C100–C142.

The protein belongs to the 2S seed storage albumins family. As to quaternary structure, heterodimer of a small chain and a large chain; disulfide-linked.

It localises to the endoplasmic reticulum. This chain is Conglutin delta 3, found in Lupinus angustifolius (Narrow-leaved blue lupine).